The primary structure comprises 149 residues: Cytochrome c-type biogenesis protein CcmE (149 aa).

At 1 to 8 (MNPKRKQR) the chain is on the cytoplasmic side. A helical; Signal-anchor for type II membrane protein transmembrane segment spans residues 9 to 29 (LIIVSFLVIGVSATVGLIMAA). Over 30 to 149 (LSSNVNHFYN…AQDAAPAQTY (120 aa)) the chain is Periplasmic. H124 and Y128 together coordinate heme.

Belongs to the CcmE/CycJ family.

It is found in the cell inner membrane. In terms of biological role, heme chaperone required for the biogenesis of c-type cytochromes. Transiently binds heme delivered by CcmC and transfers the heme to apo-cytochromes in a process facilitated by CcmF and CcmH. The sequence is that of Cytochrome c-type biogenesis protein CcmE from Hahella chejuensis (strain KCTC 2396).